Consider the following 358-residue polypeptide: Glutamate--cysteine ligase (358 aa).

It belongs to the glutamate--cysteine ligase type 2 family. YbdK subfamily.

The catalysed reaction is L-cysteine + L-glutamate + ATP = gamma-L-glutamyl-L-cysteine + ADP + phosphate + H(+). Catalyzes the synthesis of gamma-glutamylcysteine (gamma-GC), the main low-molecular-weight thiol compound instead of glutathione in halophilic archaea. This chain is Glutamate--cysteine ligase, found in Haloferax volcanii (strain ATCC 29605 / DSM 3757 / JCM 8879 / NBRC 14742 / NCIMB 2012 / VKM B-1768 / DS2) (Halobacterium volcanii).